Here is an 84-residue protein sequence, read N- to C-terminus: CDC42 small effector protein 2-A (84 aa).

S-palmitoyl cysteine attachment occurs at residues Cys10 and Cys11. In terms of domain architecture, CRIB spans 29–42 (IGEPTNFVHTAHVG).

This sequence belongs to the CDC42SE/SPEC family.

It localises to the cytoplasm. It is found in the cytoskeleton. Its subcellular location is the cell membrane. Probably involved in the organization of the actin cytoskeleton by acting downstream of CDC42, inducing actin filament assembly. The polypeptide is CDC42 small effector protein 2-A (cdc42se2-a) (Xenopus laevis (African clawed frog)).